A 1226-amino-acid chain; its full sequence is Polyamine-transporting ATPase 13A3 (1226 aa).

Topologically, residues 1 to 28 (MDREERKTINQGQEDEMEIYGYNLSRWK) are cytoplasmic. An intramembrane segment occupies 29-49 (LAIVSLGVICSGGFLLLLLYW). Residues 50–205 (MPEWRVKATC…IAVKVPSVFK (156 aa)) are Cytoplasmic-facing. Residue serine 98 is modified to Phosphoserine. The chain crosses the membrane as a helical span at residues 206 to 226 (LLIKEVLNPFYIFQLFSVILW). Residues 227–232 (STDEYY) lie on the Lumenal side of the membrane. The chain crosses the membrane as a helical span at residues 233–253 (YYALAIVVMSIVSIVSSLYSI). The Cytoplasmic portion of the chain corresponds to 254 to 409 (RKQYVMLHDM…KPTDFKLYRD (156 aa)). A helical transmembrane segment spans residues 410–430 (AYLFLLCLVAVAGIGFIYTII). Residues 431–448 (NSILNEVQVGVIIIESLD) are Lumenal-facing. Residues 449–469 (IITITVPPALPAAMTAGIVYA) traverse the membrane as a helical segment. Topologically, residues 470–940 (QRRLKKIGIF…ALITSFCVFK (471 aa)) are cytoplasmic. The 4-aspartylphosphate intermediate role is filled by aspartate 498. Mg(2+) is bound by residues aspartate 498 and threonine 500. ATP contacts are provided by residues 498–500 (DKT), phenylalanine 628, arginine 684, and aspartate 750. Serine 817 carries the phosphoserine modification. 2 residues coordinate Mg(2+): aspartate 883 and aspartate 887. 883–887 (DGAND) contacts ATP. A helical membrane pass occupies residues 941-961 (FMALYSIIQYFSVTLLYSILS). Asparagine 962 is a topological domain (lumenal). The helical transmembrane segment at 963–983 (LGDFQFLFIDLAIILVVVFTM) threads the bilayer. The Cytoplasmic portion of the chain corresponds to 984–999 (SLNPAWKELVAQRPPS). The helical transmembrane segment at 1000–1020 (GLISGALLFSVLSQIIICIGF) threads the bilayer. At 1021–1073 (QSLGFFWVKQQPWYEVWHPKSDACNTTGSGFWNSSHVDNETELDEHNIQNYEN) the chain is on the lumenal side. Residues 1074–1094 (TTVFFISSFQYLIVAIAFSKG) form a helical membrane-spanning segment. Residues 1095-1105 (KPFRQPCYKNY) are Cytoplasmic-facing. The helical transmembrane segment at 1106–1126 (FFVFSVIFLYIFILFIMLYPV) threads the bilayer. Over 1127–1143 (ASVDQVLQIVCVPYQWR) the chain is Lumenal. The chain crosses the membrane as a helical span at residues 1144 to 1164 (VTMLIIVLVNAFVSITVEESV). The Cytoplasmic portion of the chain corresponds to 1165–1226 (DRWGKCCLPW…NGSCQIITIT (62 aa)).

The protein belongs to the cation transport ATPase (P-type) (TC 3.A.3) family. Type V subfamily. Broadly expressed.

It is found in the recycling endosome membrane. The protein resides in the early endosome membrane. It localises to the late endosome membrane. It catalyses the reaction putrescine(out) + ATP + H2O = putrescine(in) + ADP + phosphate + H(+). Functionally, ATP-driven pump involved in endocytosis-dependent polyamine transport. Uses ATP as an energy source to transfer polyamine precursor putrescine from the endosomal compartment to the cytosol. This Homo sapiens (Human) protein is Polyamine-transporting ATPase 13A3.